The following is a 389-amino-acid chain: Serpin B13 (389 aa).

This sequence belongs to the serpin family. Ov-serpin subfamily.

The protein resides in the cytoplasm. In terms of biological role, may play a role in the proliferation or differentiation of keratinocytes. This chain is Serpin B13 (Serpinb13), found in Mus musculus (Mouse).